The primary structure comprises 156 residues: Endoribonuclease YbeY (156 aa).

Zn(2+) is bound by residues His117, His121, and His127.

This sequence belongs to the endoribonuclease YbeY family. The cofactor is Zn(2+).

The protein localises to the cytoplasm. Functionally, single strand-specific metallo-endoribonuclease involved in late-stage 70S ribosome quality control and in maturation of the 3' terminus of the 16S rRNA. The protein is Endoribonuclease YbeY of Shewanella halifaxensis (strain HAW-EB4).